A 601-amino-acid polypeptide reads, in one-letter code: Elongation factor 4 (601 aa).

One can recognise a tr-type G domain in the interval 6–188 (SHIRNFSIIA…QIVHRVPAPE (183 aa)). Residues 18–23 (DHGKST) and 135–138 (NKID) each bind GTP.

It belongs to the TRAFAC class translation factor GTPase superfamily. Classic translation factor GTPase family. LepA subfamily.

It localises to the cell inner membrane. The catalysed reaction is GTP + H2O = GDP + phosphate + H(+). In terms of biological role, required for accurate and efficient protein synthesis under certain stress conditions. May act as a fidelity factor of the translation reaction, by catalyzing a one-codon backward translocation of tRNAs on improperly translocated ribosomes. Back-translocation proceeds from a post-translocation (POST) complex to a pre-translocation (PRE) complex, thus giving elongation factor G a second chance to translocate the tRNAs correctly. Binds to ribosomes in a GTP-dependent manner. The chain is Elongation factor 4 from Anaeromyxobacter sp. (strain K).